A 114-amino-acid polypeptide reads, in one-letter code: Ribonuclease P protein component (114 aa).

The protein belongs to the RnpA family. In terms of assembly, consists of a catalytic RNA component (M1 or rnpB) and a protein subunit.

The catalysed reaction is Endonucleolytic cleavage of RNA, removing 5'-extranucleotides from tRNA precursor.. In terms of biological role, RNaseP catalyzes the removal of the 5'-leader sequence from pre-tRNA to produce the mature 5'-terminus. It can also cleave other RNA substrates such as 4.5S RNA. The protein component plays an auxiliary but essential role in vivo by binding to the 5'-leader sequence and broadening the substrate specificity of the ribozyme. This Limosilactobacillus fermentum (strain NBRC 3956 / LMG 18251) (Lactobacillus fermentum) protein is Ribonuclease P protein component.